Reading from the N-terminus, the 121-residue chain is Large ribosomal subunit protein uL18 (121 aa).

Belongs to the universal ribosomal protein uL18 family. Part of the 50S ribosomal subunit; part of the 5S rRNA/L5/L18/L25 subcomplex. Contacts the 5S and 23S rRNAs.

Functionally, this is one of the proteins that bind and probably mediate the attachment of the 5S RNA into the large ribosomal subunit, where it forms part of the central protuberance. In Paraburkholderia phytofirmans (strain DSM 17436 / LMG 22146 / PsJN) (Burkholderia phytofirmans), this protein is Large ribosomal subunit protein uL18.